The sequence spans 293 residues: Alcohol dehydrogenase 1 (293 aa).

The Zn(2+) site is built by Cys-26, Cys-29, Cys-32, Cys-40, and Cys-104. NAD(+)-binding positions include 129–134, Asp-153, Arg-158, Thr-199, Val-222, 222–224, and Phe-249; these read GLGAVG and VGV.

The protein belongs to the zinc-containing alcohol dehydrogenase family. In terms of assembly, homodimer. Zn(2+) serves as cofactor.

Its subcellular location is the cytoplasm. The enzyme catalyses a primary alcohol + NAD(+) = an aldehyde + NADH + H(+). The catalysed reaction is a secondary alcohol + NAD(+) = a ketone + NADH + H(+). The chain is Alcohol dehydrogenase 1 (ADH1) from Zea luxurians (Guatemalan teosinte).